Consider the following 176-residue polypeptide: Peptide deformylase (176 aa).

Residues C100 and H142 each contribute to the Fe cation site. E143 is a catalytic residue. Residue H146 participates in Fe cation binding.

The protein belongs to the polypeptide deformylase family. It depends on Fe(2+) as a cofactor.

It carries out the reaction N-terminal N-formyl-L-methionyl-[peptide] + H2O = N-terminal L-methionyl-[peptide] + formate. Its function is as follows. Removes the formyl group from the N-terminal Met of newly synthesized proteins. Requires at least a dipeptide for an efficient rate of reaction. N-terminal L-methionine is a prerequisite for activity but the enzyme has broad specificity at other positions. The sequence is that of Peptide deformylase from Elusimicrobium minutum (strain Pei191).